We begin with the raw amino-acid sequence, 153 residues long: 6,7-dimethyl-8-ribityllumazine synthase (153 aa).

Residues Phe-22, 56–58 (AFE), and 80–82 (CVI) each bind 5-amino-6-(D-ribitylamino)uracil. Residue 85 to 86 (AT) coordinates (2S)-2-hydroxy-3-oxobutyl phosphate. Residue His-88 is the Proton donor of the active site. Phe-113 provides a ligand contact to 5-amino-6-(D-ribitylamino)uracil. Arg-127 provides a ligand contact to (2S)-2-hydroxy-3-oxobutyl phosphate.

This sequence belongs to the DMRL synthase family.

The catalysed reaction is (2S)-2-hydroxy-3-oxobutyl phosphate + 5-amino-6-(D-ribitylamino)uracil = 6,7-dimethyl-8-(1-D-ribityl)lumazine + phosphate + 2 H2O + H(+). The protein operates within cofactor biosynthesis; riboflavin biosynthesis; riboflavin from 2-hydroxy-3-oxobutyl phosphate and 5-amino-6-(D-ribitylamino)uracil: step 1/2. Functionally, catalyzes the formation of 6,7-dimethyl-8-ribityllumazine by condensation of 5-amino-6-(D-ribitylamino)uracil with 3,4-dihydroxy-2-butanone 4-phosphate. This is the penultimate step in the biosynthesis of riboflavin. This is 6,7-dimethyl-8-ribityllumazine synthase from Endomicrobium trichonymphae.